Reading from the N-terminus, the 375-residue chain is Platelet-derived growth factor receptor-like protein (375 aa).

The N-terminal stretch at 1-21 (MKFWLLLGLLLLHEALEDVAG) is a signal peptide. A disordered region spans residues 20 to 63 (AGQHSPKNKRPKEQGENRIKPTNKKAKPKIPKVKDRDSTDSTAK). Basic residues predominate over residues 40 to 50 (PTNKKAKPKIP). The Ig-like C2-type 1 domain maps to 47–159 (PKIPKVKDRD…GYICRRDEAK (113 aa)). Cys96 and Cys143 are joined by a disulfide. Asn219 carries N-linked (GlcNAc...) asparagine glycosylation. One can recognise an Ig-like C2-type 2 domain in the interval 272 to 375 (PSTTILASSN…TTVATTVEFS (104 aa)). Cys293 and Cys357 are joined by a disulfide.

As to quaternary structure, forms a complex composed of PDGFRL, TNK2 and GRB2.

It localises to the secreted. This Mus musculus (Mouse) protein is Platelet-derived growth factor receptor-like protein (Pdgfrl).